A 263-amino-acid chain; its full sequence is MWYMRWEGVSDGLKVTAGSVIQRDDLVQYTTTDDATSSGGVLRVPIACSSAGAVGNADDGTALILVTPVNGLPSSGVADTLTGGFDTEELETWRARVIERYYWTPQGGADGDYVVWAKEVPGITRAWTYRHLMGTGTVGVMIASSDLINPIPEESTETAARQHIGPLAPVAGSDLYVFRPVAHTVDFHIRVTPDTPEIRAAITAELRSFLLRDGYPQGELKVSRISEAISGANGEYSHQLLAPVDNISIAKNELAVLGTISWT.

Belongs to the Mu gp47/PBSX XkdT family.

The protein is Putative protein JayE (jayE) of Escherichia coli (strain K12).